A 280-amino-acid polypeptide reads, in one-letter code: Vitamin B12-binding protein (280 aa).

The signal sequence occupies residues 1-27 (MMPLGLFPLPRAAAVLLISLLTLPAQA). Positions 30–277 (RVISLSPSTT…QMASIPTPVA (248 aa)) constitute a Fe/B12 periplasmic-binding domain. A cyanocob(III)alamin-binding site is contributed by Tyr57. Cys190 and Cys266 are oxidised to a cystine.

It belongs to the BtuF family. As to quaternary structure, the complex is composed of two ATP-binding proteins (BtuD), two transmembrane proteins (BtuC) and a solute-binding protein (BtuF).

The protein resides in the periplasm. Functionally, part of the ABC transporter complex BtuCDF involved in vitamin B12 import. Binds vitamin B12 and delivers it to the periplasmic surface of BtuC. The sequence is that of Vitamin B12-binding protein from Yersinia pestis bv. Antiqua (strain Antiqua).